The chain runs to 262 residues: MAVGKNKRISKGKKGSKKKTVDPFAKKDWYDIKAPSVFNVRNIGKTLVSRTQGTKIASEGLKHRVFEVSLADLQNDEDQAYRKIRLRAEDVQGKNVLTNFWGMSFTTDKLRSLVKKWQTLIEAHVDVKTTDGYMLRLFCIGFTKRRPNQVKRTCYAQASQIRQIRRKMVEIMANQASSCDLKELVSKFIPEVIGKEIEKATSSIFPLQNVFVRKVKILKAPKFDLGKLMEVHGDYAKEDIGTKLDRPAEDEAMAGQEVAAAE.

Positions 1–18 are enriched in basic residues; the sequence is MAVGKNKRISKGKKGSKK. The tract at residues 1–20 is disordered; that stretch reads MAVGKNKRISKGKKGSKKKT.

Belongs to the eukaryotic ribosomal protein eS1 family. As to quaternary structure, component of the small ribosomal subunit. Mature ribosomes consist of a small (40S) and a large (60S) subunit. The 40S subunit contains about 33 different proteins and 1 molecule of RNA (18S). The 60S subunit contains about 49 different proteins and 3 molecules of RNA (25S, 5.8S and 5S).

Its subcellular location is the cytoplasm. This is Small ribosomal subunit protein eS1 from Oryza sativa subsp. japonica (Rice).